A 637-amino-acid chain; its full sequence is MAKVRILIFTLVLFFSLNVHIHGFYLPGVAPQDFQMGDALMVKVNKLTSTKTQLPYSYYSLPYCRPEHIVDSAENLGEVLRGDRIENSPFVFKMRESQMCAAVCRVKLDKKTAKAFKEKIADEYRVNMILDNLPLVVPVQRPDQDNVVVYQHGFHVGLKGIFAGKKEEKYFIHNHLTFTVRYHRDIQTDSSRIVGFEVKPFSVKHEYEGQWNEKARLTTCDPHTKRAVTNSESPQEVEEGNEIIFTYDVDFQESEVKWASRWDTYLLMADDQIHWFSIVNSMMIVLFLSGMVAMIMLRTLYRDISNYNQLESHEEALEETGWKLVHGDVFRPPTNPELLCVYAGTGVQCFGMILVTMIFACLGFLSPSNRGGLMTAMLLLWVFMGLLAGYASSRLYKTLRGTEWKRNALKTAFMFPATVFVAFFVLNAIIWGQKSSGAVPFGTMFALVVLWFGISVPLVFIGGYIGFRKPAPEDPVKTNKIPRQIPTQAWYMNPIFSILIGGILPFGAVFIELFFILTSIWLHQFYYIFGFLFIVFIILIITCAEITVVLCYFQLCSEDYQWWWRSYLTSGSSAVYLFLYAVFYFYTKLEITKLVSAVLYFGYMLIVSYVFFVFTGAIGFYACFWFTRLIYSSVKID.

The N-terminal stretch at Met-1–Gly-23 is a signal peptide. Over Phe-24–His-274 the chain is Lumenal. Residues Trp-275–Ile-295 traverse the membrane as a helical segment. Residues Met-296–Gly-344 lie on the Cytoplasmic side of the membrane. The helical transmembrane segment at Thr-345–Leu-365 threads the bilayer. Residues Ser-366 to Arg-370 lie on the Lumenal side of the membrane. The helical transmembrane segment at Gly-371–Ala-391 threads the bilayer. Over Ser-392–Thr-411 the chain is Cytoplasmic. The helical transmembrane segment at Ala-412–Gly-432 threads the bilayer. Over Gln-433–Met-444 the chain is Lumenal. The helical transmembrane segment at Phe-445–Ile-465 threads the bilayer. The Cytoplasmic portion of the chain corresponds to Gly-466–Pro-494. Residues Ile-495 to Phe-515 traverse the membrane as a helical segment. Over Ile-516–Tyr-527 the chain is Lumenal. The chain crosses the membrane as a helical span at residues Ile-528–Val-548. At Val-549 to Ser-566 the chain is on the cytoplasmic side. A helical transmembrane segment spans residues Tyr-567–Thr-587. Topologically, residues Lys-588–Lys-593 are lumenal. A helical transmembrane segment spans residues Leu-594 to Phe-614. Residues Thr-615–Asp-637 lie on the Cytoplasmic side of the membrane. The short motif at Phe-626–Tyr-631 is the Endoplasmic reticulum export signal element. Residues Lys-635–Asp-637 carry the Golgi retention signal motif.

The protein belongs to the nonaspanin (TM9SF) (TC 9.A.2) family.

It is found in the endosome membrane. Its subcellular location is the golgi apparatus membrane. The polypeptide is Transmembrane 9 superfamily member 10 (Arabidopsis thaliana (Mouse-ear cress)).